Reading from the N-terminus, the 483-residue chain is Regulatory protein ViaA (483 aa).

It belongs to the ViaA family. Homodimer. Interacts with RavA.

Its subcellular location is the cytoplasm. Its function is as follows. Component of the RavA-ViaA chaperone complex, which may act on the membrane to optimize the function of some of the respiratory chains. ViaA stimulates the ATPase activity of RavA. This chain is Regulatory protein ViaA, found in Escherichia coli O17:K52:H18 (strain UMN026 / ExPEC).